A 77-amino-acid polypeptide reads, in one-letter code: Teretoxin Tan15.2 (77 aa).

The signal sequence occupies residues 1–21 (MTRLTVVFLAILVLLPLATSN). Residues 22–40 (SGADEAPASLSDLLHRTKR) constitute a propeptide that is removed on maturation.

Contains 4 disulfide bonds. In terms of tissue distribution, expressed by the venom duct.

The protein resides in the secreted. This is Teretoxin Tan15.2 from Terebra anilis (Auger snail).